A 72-amino-acid polypeptide reads, in one-letter code: Small ribosomal subunit protein bS20 (72 aa).

The protein belongs to the bacterial ribosomal protein bS20 family.

Its function is as follows. Binds directly to 16S ribosomal RNA. This is Small ribosomal subunit protein bS20 (rpsT) from Aeromonas hydrophila.